A 526-amino-acid chain; its full sequence is Vang-like protein 1 (526 aa).

The span at M1–S15 shows a compositional bias: low complexity. The disordered stretch occupies residues M1–H87. The Cytoplasmic segment spans residues M1–G114. The span at G75 to H87 shows a compositional bias: polar residues. Residues S88 and S90 each carry the phosphoserine modification. The helical transmembrane segment at L115–L135 threads the bilayer. Over P136–G153 the chain is Extracellular. Residues L154–F174 traverse the membrane as a helical segment. Residues R175–V184 are Cytoplasmic-facing. A helical membrane pass occupies residues F185–F205. At Y206 to Y224 the chain is on the extracellular side. A helical membrane pass occupies residues A225–L245. Topologically, residues R246–V526 are cytoplasmic.

This sequence belongs to the Vang family. In terms of assembly, heterodimer with Vangl2. Interacts through its C-terminal region with the N-terminal half of DVL1, DVL2 and DVL3. The PDZ domain of DVL1, DVL2 and DVL3 is required for the interaction.

The protein localises to the cell membrane. The protein is Vang-like protein 1 (Vangl1) of Mus musculus (Mouse).